We begin with the raw amino-acid sequence, 316 residues long: Probable cobalamin biosynthesis protein CobD (316 aa).

The next 5 membrane-spanning stretches (helical) occupy residues 1–21 (MITE…DIVL), 50–70 (ISGM…GFAL), 89–109 (ILAL…KSLI), 165–185 (PLFY…ALAF), and 294–314 (ISLI…LLIL).

The protein belongs to the CobD/CbiB family.

The protein localises to the cell membrane. It functions in the pathway cofactor biosynthesis; adenosylcobalamin biosynthesis. Functionally, converts cobyric acid to cobinamide by the addition of aminopropanol on the F carboxylic group. The chain is Probable cobalamin biosynthesis protein CobD from Methanothrix thermoacetophila (strain DSM 6194 / JCM 14653 / NBRC 101360 / PT) (Methanosaeta thermophila).